A 154-amino-acid chain; its full sequence is MGLSDDEWHHVLGIWAKVEPDLSAHGQEVIIRLFQVHPETQERFAKFKNLKTIDELRSSEEVKKHGTTVLTALGRILKLKNNHEPELKPLAESHATKHKIPVKYLEFICEIIVKVIAEKHPSDFGADSQAAMRKALELFRNDMASKYKEFGFQG.

One can recognise a Globin domain in the interval 2–148 (GLSDDEWHHV…FRNDMASKYK (147 aa)). H65 is a nitrite binding site. Residue H65 coordinates O2. Heme b is bound at residue H94.

It belongs to the globin family. As to quaternary structure, monomeric.

It is found in the cytoplasm. It localises to the sarcoplasm. The enzyme catalyses Fe(III)-heme b-[protein] + nitric oxide + H2O = Fe(II)-heme b-[protein] + nitrite + 2 H(+). It carries out the reaction H2O2 + AH2 = A + 2 H2O. Functionally, monomeric heme protein which primary function is to store oxygen and facilitate its diffusion within muscle tissues. Reversibly binds oxygen through a pentacoordinated heme iron and enables its timely and efficient release as needed during periods of heightened demand. Depending on the oxidative conditions of tissues and cells, and in addition to its ability to bind oxygen, it also has a nitrite reductase activity whereby it regulates the production of bioactive nitric oxide. Under stress conditions, like hypoxia and anoxia, it also protects cells against reactive oxygen species thanks to its pseudoperoxidase activity. This Graptemys geographica (Common map turtle) protein is Myoglobin (MB).